The sequence spans 344 residues: D-arabinose dehydrogenase [NAD(P)+] heavy chain (344 aa).

The Proton donor role is filled by Y71. Substrate is bound at residue H131. Residue T151 is modified to Phosphothreonine. 241-295 (SPLGSHGAPNLKIPLVKKLAEKYNVTGNDLLISYHIRQGTIVIPRSLNPVRISSS) serves as a coordination point for NADP(+).

The protein belongs to the aldo/keto reductase family. As to quaternary structure, heterodimer of a heavy chain and a light chain.

It localises to the cytoplasm. It catalyses the reaction D-arabinose + NADP(+) = D-arabinono-1,4-lactone + NADPH + H(+). It carries out the reaction D-arabinose + NAD(+) = D-arabinono-1,4-lactone + NADH + H(+). Catalyzes the oxidation of D-arabinose, L-xylose, L-fucose and L-galactose in the presence of NADP(+). This Saccharomyces cerevisiae (strain ATCC 204508 / S288c) (Baker's yeast) protein is D-arabinose dehydrogenase [NAD(P)+] heavy chain (ARA1).